Here is a 612-residue protein sequence, read N- to C-terminus: Chaperone protein DnaK (612 aa).

Position 173 is a phosphothreonine; by autocatalysis (T173). The disordered stretch occupies residues 576 to 612; that stretch reads AAKAQQAEGGANAEGKKADDNVVDAEYEEVKDDETKK. The span at 578 to 588 shows a compositional bias: low complexity; that stretch reads KAQQAEGGANA. Acidic residues predominate over residues 596-612; sequence NVVDAEYEEVKDDETKK.

The protein belongs to the heat shock protein 70 family.

In terms of biological role, acts as a chaperone. This chain is Chaperone protein DnaK, found in Bacillus velezensis (strain DSM 23117 / BGSC 10A6 / LMG 26770 / FZB42) (Bacillus amyloliquefaciens subsp. plantarum).